Here is a 401-residue protein sequence, read N- to C-terminus: Argininosuccinate synthase (401 aa).

Residues 10-18 and Ala-38 each bind ATP; that span reads AYSGGVDTS. L-citrulline is bound at residue Tyr-89. Gly-119 contributes to the ATP binding site. 3 residues coordinate L-aspartate: Thr-121, Asn-125, and Asp-126. Asn-125 contributes to the L-citrulline binding site. Residues Arg-129, Ser-177, Ser-186, Glu-262, and Tyr-274 each coordinate L-citrulline.

Belongs to the argininosuccinate synthase family. Type 1 subfamily. As to quaternary structure, homotetramer.

The protein localises to the cytoplasm. The enzyme catalyses L-citrulline + L-aspartate + ATP = 2-(N(omega)-L-arginino)succinate + AMP + diphosphate + H(+). It participates in amino-acid biosynthesis; L-arginine biosynthesis; L-arginine from L-ornithine and carbamoyl phosphate: step 2/3. In Prochlorococcus marinus (strain MIT 9313), this protein is Argininosuccinate synthase.